Reading from the N-terminus, the 341-residue chain is Holliday junction branch migration complex subunit RuvB (341 aa).

Residues 1 to 180 (MAKSHTLNPE…FGIQLRLDYY (180 aa)) are large ATPase domain (RuvB-L). 9 residues coordinate ATP: Leu19, Arg20, Gly61, Lys64, Thr65, Thr66, Arg170, Tyr180, and Arg217. Residue Thr65 participates in Mg(2+) binding. The segment at 181-251 (NDEEMKQIVL…LCLKAFEKMG (71 aa)) is small ATPAse domain (RuvB-S). A head domain (RuvB-H) region spans residues 254-341 (DLGLDGMDRQ…VHHGQDPTLF (88 aa)). DNA-binding residues include Arg309 and Arg314.

This sequence belongs to the RuvB family. In terms of assembly, homohexamer. Forms an RuvA(8)-RuvB(12)-Holliday junction (HJ) complex. HJ DNA is sandwiched between 2 RuvA tetramers; dsDNA enters through RuvA and exits via RuvB. An RuvB hexamer assembles on each DNA strand where it exits the tetramer. Each RuvB hexamer is contacted by two RuvA subunits (via domain III) on 2 adjacent RuvB subunits; this complex drives branch migration. In the full resolvosome a probable DNA-RuvA(4)-RuvB(12)-RuvC(2) complex forms which resolves the HJ.

The protein localises to the cytoplasm. The enzyme catalyses ATP + H2O = ADP + phosphate + H(+). In terms of biological role, the RuvA-RuvB-RuvC complex processes Holliday junction (HJ) DNA during genetic recombination and DNA repair, while the RuvA-RuvB complex plays an important role in the rescue of blocked DNA replication forks via replication fork reversal (RFR). RuvA specifically binds to HJ cruciform DNA, conferring on it an open structure. The RuvB hexamer acts as an ATP-dependent pump, pulling dsDNA into and through the RuvAB complex. RuvB forms 2 homohexamers on either side of HJ DNA bound by 1 or 2 RuvA tetramers; 4 subunits per hexamer contact DNA at a time. Coordinated motions by a converter formed by DNA-disengaged RuvB subunits stimulates ATP hydrolysis and nucleotide exchange. Immobilization of the converter enables RuvB to convert the ATP-contained energy into a lever motion, pulling 2 nucleotides of DNA out of the RuvA tetramer per ATP hydrolyzed, thus driving DNA branch migration. The RuvB motors rotate together with the DNA substrate, which together with the progressing nucleotide cycle form the mechanistic basis for DNA recombination by continuous HJ branch migration. Branch migration allows RuvC to scan DNA until it finds its consensus sequence, where it cleaves and resolves cruciform DNA. This is Holliday junction branch migration complex subunit RuvB from Leptospira interrogans serogroup Icterohaemorrhagiae serovar copenhageni (strain Fiocruz L1-130).